The chain runs to 255 residues: Sulfate transporter CysZ (255 aa).

4 consecutive transmembrane segments (helical) span residues 26 to 46, 71 to 91, 150 to 170, and 211 to 231; these read LFVLLPLAINLVLFVGLIYFA, LLWPLFVVLVVLMVFFTFTML, LFILSFIPVVNLIAAPLWLLF, and IVYLVLLVPVVNLLMMPAAVA.

This sequence belongs to the CysZ family.

The protein resides in the cell inner membrane. In terms of biological role, high affinity, high specificity proton-dependent sulfate transporter, which mediates sulfate uptake. Provides the sulfur source for the cysteine synthesis pathway. This chain is Sulfate transporter CysZ, found in Pseudomonas fluorescens (strain SBW25).